We begin with the raw amino-acid sequence, 158 residues long: NAD(P)H-quinone oxidoreductase subunit J, chloroplastic (158 aa).

Belongs to the complex I 30 kDa subunit family. In terms of assembly, NDH is composed of at least 16 different subunits, 5 of which are encoded in the nucleus.

Its subcellular location is the plastid. The protein resides in the chloroplast thylakoid membrane. The enzyme catalyses a plastoquinone + NADH + (n+1) H(+)(in) = a plastoquinol + NAD(+) + n H(+)(out). The catalysed reaction is a plastoquinone + NADPH + (n+1) H(+)(in) = a plastoquinol + NADP(+) + n H(+)(out). Functionally, NDH shuttles electrons from NAD(P)H:plastoquinone, via FMN and iron-sulfur (Fe-S) centers, to quinones in the photosynthetic chain and possibly in a chloroplast respiratory chain. The immediate electron acceptor for the enzyme in this species is believed to be plastoquinone. Couples the redox reaction to proton translocation, and thus conserves the redox energy in a proton gradient. This Cryptomeria japonica (Japanese cedar) protein is NAD(P)H-quinone oxidoreductase subunit J, chloroplastic.